Here is a 309-residue protein sequence, read N- to C-terminus: MVFPAKRLCVVPSMEGVRWAFSCGTWLPSRAEWLLAMRSIQPEEKERIGKFVFARDAKAALAGRLMIRKLVAEKLNIPWDHIRLQRTSKGKPVLAKDSLNPYPNFNFNISHQGDYAVLAAEPEVQVGIDIMKTSFPGRGSIPEFFHIMKRKFTKKEWETIRSFNDEWTQLDMFYRHWALKESFIKAIGVGLGFEMQRLEFDVSPLNMDIGQVYKETCLILDGEEEKEWAFEESKIDEHHFVAVAVRKPDGSRHQNVSYQDDSKLSQRKFTILNFNDLVASAIPMTPEDPSFWDCFCFTEEILIRNGTKS.

CoA-binding positions include Arg-47, 86-91 (RTSKGK), and 108-111 (NISH). The Mg(2+) site is built by Asp-129 and Glu-181. CoA is bound at residue 181–185 (ESFIK).

Belongs to the P-Pant transferase superfamily. AcpS family. In terms of assembly, monomer. The cofactor is Mg(2+).

The protein resides in the cytoplasm. Its subcellular location is the cytosol. The enzyme catalyses apo-[ACP] + CoA = holo-[ACP] + adenosine 3',5'-bisphosphate + H(+). The catalysed reaction is apo-[ACP] + acetyl-CoA = acetyl-[ACP] + adenosine 3',5'-bisphosphate + H(+). Functionally, catalyzes the post-translational modification of target proteins by phosphopantetheine. Can transfer the 4'-phosphopantetheine moiety from coenzyme A, regardless of whether the CoA is presented in the free thiol form or as an acetyl thioester, to a serine residue of a broad range of acceptors including the acyl carrier domain of FASN. This chain is L-aminoadipate-semialdehyde dehydrogenase-phosphopantetheinyl transferase (Aasdhppt), found in Mus musculus (Mouse).